The primary structure comprises 607 residues: Chaperone protein DnaK (607 aa).

Position 174 is a phosphothreonine; by autocatalysis (Thr174). A compositionally biased stretch (polar residues) spans 577–594 (QSAGSTAGNPGQGQSTEN). Residues 577-607 (QSAGSTAGNPGQGQSTENPGGKTIDGDYKVN) are disordered.

The protein belongs to the heat shock protein 70 family.

Acts as a chaperone. The protein is Chaperone protein DnaK of Dictyoglomus turgidum (strain DSM 6724 / Z-1310).